The sequence spans 179 residues: uncharacterized protein (179 aa).

The next 4 helical transmembrane spans lie at Trp-9–Leu-31, Ala-41–Phe-63, Ala-114–Ala-136, and Ala-146–Met-168.

The protein resides in the cell membrane. This is an uncharacterized protein from Aquifex aeolicus (strain VF5).